We begin with the raw amino-acid sequence, 1295 residues long: DNA-directed RNA polymerase subunit beta' (1295 aa).

Zn(2+)-binding residues include cysteine 60, cysteine 62, cysteine 75, and cysteine 78. Mg(2+) contacts are provided by aspartate 516, aspartate 518, and aspartate 520. Residues cysteine 841, cysteine 914, cysteine 921, and cysteine 924 each coordinate Zn(2+).

Belongs to the RNA polymerase beta' chain family. The RNAP catalytic core consists of 2 alpha, 1 beta, 1 beta' and 1 omega subunit. When a sigma factor is associated with the core the holoenzyme is formed, which can initiate transcription. Requires Mg(2+) as cofactor. Zn(2+) is required as a cofactor.

The enzyme catalyses RNA(n) + a ribonucleoside 5'-triphosphate = RNA(n+1) + diphosphate. Its function is as follows. DNA-dependent RNA polymerase catalyzes the transcription of DNA into RNA using the four ribonucleoside triphosphates as substrates. The protein is DNA-directed RNA polymerase subunit beta' of Dehalococcoides mccartyi (strain ATCC BAA-2100 / JCM 16839 / KCTC 5957 / BAV1).